The chain runs to 358 residues: Transcription factor bHLH67 (358 aa).

The disordered stretch occupies residues 125–176 (NMTLPSSTSSPLSAHSRRKRKINHLLPQEMTREKRKRRKTKPSKNNEEIENQ). Residues 127 to 137 (TLPSSTSSPLS) are compositionally biased toward low complexity. A compositionally biased stretch (basic residues) spans 157-166 (EKRKRRKTKP). Residues 175 to 226 (NQRINHIAVERNRRRQMNEHINSLRALLPPSYIQRGDQASIVGGAINYVKVL) enclose the bHLH domain.

In terms of assembly, homodimer. As to expression, expressed constitutively in roots, leaves, stems, and flowers.

Its subcellular location is the nucleus. The polypeptide is Transcription factor bHLH67 (BHLH67) (Arabidopsis thaliana (Mouse-ear cress)).